We begin with the raw amino-acid sequence, 401 residues long: Cytochrome P450 BJ-1 (401 aa).

Cys350 lines the heme pocket.

The protein belongs to the cytochrome P450 family. Requires heme as cofactor.

Its function is as follows. Cytochromes P450 are a group of heme-thiolate monooxygenases. They oxidize a variety of structurally unrelated compounds, including steroids, fatty acids, and xenobiotics. The protein is Cytochrome P450 BJ-1 (cyp112) of Bradyrhizobium diazoefficiens (strain JCM 10833 / BCRC 13528 / IAM 13628 / NBRC 14792 / USDA 110).